The chain runs to 534 residues: CD276 antigen (534 aa).

A signal peptide spans 1–28; sequence MLRRRGSPGMGVHVGAALGALWFCLTGA. The Ig-like V-type 1 domain maps to 29–139; it reads LEVQVPEDPV…GSAAVSLQVA (111 aa). At 29-466 the chain is on the extracellular side; sequence LEVQVPEDPV…GQPMTFPPEA (438 aa). Intrachain disulfides connect cysteine 50–cysteine 122, cysteine 165–cysteine 220, cysteine 268–cysteine 340, and cysteine 383–cysteine 438. Residues asparagine 104, asparagine 189, asparagine 215, asparagine 322, asparagine 407, and asparagine 433 are each glycosylated (N-linked (GlcNAc...) asparagine). An Ig-like C2-type 1 domain is found at 145–238; it reads PSMTLEPNKD…QDAHSSVTIT (94 aa). An Ig-like V-type 2 domain is found at 243-357; it reads PTGAVEVQVP…GSAAVSLQVA (115 aa). Residues 363-456 form the Ig-like C2-type 2 domain; sequence PSMTLEPNKD…QDAHGSVTIT (94 aa). A helical transmembrane segment spans residues 467–487; the sequence is LWVTVGLSVCLIALLVALAFV. At 488 to 534 the chain is on the cytoplasmic side; that stretch reads CWRKIKQSCEEENAGAEDQDGEGEGSKTALQPLKHSDSKEDDGQEIA. Over residues 498–510 the composition is skewed to acidic residues; the sequence is EENAGAEDQDGEG. Residues 498 to 534 are disordered; that stretch reads EENAGAEDQDGEGEGSKTALQPLKHSDSKEDDGQEIA. Serine 525 carries the post-translational modification Phosphoserine.

Belongs to the immunoglobulin superfamily. BTN/MOG family. As to quaternary structure, interacts with TREML2 and this interaction enhances T-cell activation. As to expression, ubiquitous but not detectable in peripheral blood lymphocytes or granulocytes. Weakly expressed in resting monocytes. Expressed in dendritic cells derived from monocytes. Expressed in epithelial cells of sinonasal tissue. Expressed in extravillous trophoblast cells and Hofbauer cells of the first trimester placenta and term placenta.

The protein localises to the membrane. Its function is as follows. May participate in the regulation of T-cell-mediated immune response. May play a protective role in tumor cells by inhibiting natural-killer mediated cell lysis as well as a role of marker for detection of neuroblastoma cells. May be involved in the development of acute and chronic transplant rejection and in the regulation of lymphocytic activity at mucosal surfaces. Could also play a key role in providing the placenta and fetus with a suitable immunological environment throughout pregnancy. Both isoform 1 and isoform 2 appear to be redundant in their ability to modulate CD4 T-cell responses. Isoform 2 is shown to enhance the induction of cytotoxic T-cells and selectively stimulates interferon gamma production in the presence of T-cell receptor signaling. This chain is CD276 antigen (CD276), found in Homo sapiens (Human).